The sequence spans 640 residues: Threonine--tRNA ligase (640 aa).

Positions 1 to 61 constitute a TGS domain; that stretch reads MVKITYPDNS…MQDSTIKLIT (61 aa). The tract at residues 242-533 is catalytic; the sequence is DHRKLGPKLN…LIENFAGEFP (292 aa). 3 residues coordinate Zn(2+): Cys-334, His-385, and His-510.

The protein belongs to the class-II aminoacyl-tRNA synthetase family. As to quaternary structure, homodimer. The cofactor is Zn(2+).

It localises to the cytoplasm. The enzyme catalyses tRNA(Thr) + L-threonine + ATP = L-threonyl-tRNA(Thr) + AMP + diphosphate + H(+). Its function is as follows. Catalyzes the attachment of threonine to tRNA(Thr) in a two-step reaction: L-threonine is first activated by ATP to form Thr-AMP and then transferred to the acceptor end of tRNA(Thr). Also edits incorrectly charged L-seryl-tRNA(Thr). The chain is Threonine--tRNA ligase from Petrotoga mobilis (strain DSM 10674 / SJ95).